The chain runs to 786 residues: Tyrosine-protein kinase Btk (786 aa).

The disordered stretch occupies residues M1–S23. Over residues S14–S23 the composition is skewed to low complexity. The PH domain maps to D41–E184. The segment at N187–W223 adopts a Btk-type zinc-finger fold. Residues H195, C206, C207, and C217 each contribute to the Zn(2+) site. Over residues A226–S240 the composition is skewed to low complexity. Residues A226–S301 form a disordered region. Over residues T241–N260 the composition is skewed to polar residues. The span at S264–S290 shows a compositional bias: gly residues. Positions C291–S301 are enriched in polar residues. One can recognise an SH3 domain in the interval H342 to L402. The region spanning W410 to P503 is the SH2 domain. The region spanning L526–L779 is the Protein kinase domain. Residues L532–V540 and K554 each bind ATP. The Proton acceptor role is filled by D647. Position 677 is a phosphotyrosine; by autocatalysis (Y677).

This sequence belongs to the protein kinase superfamily. Tyr protein kinase family. TEC subfamily. The cofactor is Zn(2+). As to expression, ring canals in the egg chambers and imaginal disks of third-instar larvae.

It catalyses the reaction L-tyrosyl-[protein] + ATP = O-phospho-L-tyrosyl-[protein] + ADP + H(+). Its function is as follows. Required for proper ring canal development. Also required for the development of male genitalia and for adult survival. The sequence is that of Tyrosine-protein kinase Btk from Drosophila melanogaster (Fruit fly).